The primary structure comprises 247 residues: 3,4-dihydroxy-2-butanone 4-phosphate synthase (247 aa).

D-ribulose 5-phosphate contacts are provided by residues R38–E39, D43, R179–T183, and E203. A Mg(2+)-binding site is contributed by E39.

It belongs to the DHBP synthase family. Homodimer. Mg(2+) is required as a cofactor. It depends on Mn(2+) as a cofactor.

The catalysed reaction is D-ribulose 5-phosphate = (2S)-2-hydroxy-3-oxobutyl phosphate + formate + H(+). It functions in the pathway cofactor biosynthesis; riboflavin biosynthesis; 2-hydroxy-3-oxobutyl phosphate from D-ribulose 5-phosphate: step 1/1. Its function is as follows. Catalyzes the conversion of D-ribulose 5-phosphate to formate and 3,4-dihydroxy-2-butanone 4-phosphate. The chain is 3,4-dihydroxy-2-butanone 4-phosphate synthase from Methanosarcina mazei (strain ATCC BAA-159 / DSM 3647 / Goe1 / Go1 / JCM 11833 / OCM 88) (Methanosarcina frisia).